A 526-amino-acid chain; its full sequence is MSNVFDGDSPTNLAEYSVSELSGSIKRTVETAFDQVRVRGEISGYRGPHSSGHAYFALKDDRARIDAVIWKGTFSRLKFRPEEGMEVIATGKVTTFPGSSKYQIVIETLEPAGAGALMALIEERKRKLGAEGLFDAARKKRLPFMPGVIGVVTSPTGAVIRDILHRISDRFPVHVLVWPVKVQGEGSGEEVANAIRGFNALEPSGTIPRPDVLIVARGGGSLEDLWSFNDEIVVRAAAESAIPLISAVGHETDWTLIDYAADVRAPTPTGAAEMAVPVKAELEAQAAGLAARLQGCMNRQMDQRRQSVRALMRALPSLDQLLALPRRRFDEAATGLGRGLELNTINKRRGFERVAAHLRPDLLAGRIAERRQTLNERMARAERMVERLIDRSKSRVDRAEAILASLPARLKTQTDRGRERLGNLSRHADTAVRHQLTRARSELSAQDRVLQSLSYKNVLKRGYAVIRDEDNRPVSQAAHLSAGMGIAIEFADGRVGAMTTEGGTPPAGAKKRSTKPAEPPKQGSLF.

The tract at residues 497-526 (AMTTEGGTPPAGAKKRSTKPAEPPKQGSLF) is disordered.

Belongs to the XseA family. As to quaternary structure, heterooligomer composed of large and small subunits.

It is found in the cytoplasm. The catalysed reaction is Exonucleolytic cleavage in either 5'- to 3'- or 3'- to 5'-direction to yield nucleoside 5'-phosphates.. In terms of biological role, bidirectionally degrades single-stranded DNA into large acid-insoluble oligonucleotides, which are then degraded further into small acid-soluble oligonucleotides. The sequence is that of Exodeoxyribonuclease 7 large subunit from Rhizobium johnstonii (strain DSM 114642 / LMG 32736 / 3841) (Rhizobium leguminosarum bv. viciae).